A 148-amino-acid chain; its full sequence is FAD synthase (148 aa).

Residues 11–12 (TF), 16–19 (HPGH), N94, and Y121 each bind ATP.

Belongs to the archaeal FAD synthase family. As to quaternary structure, homodimer. The cofactor is a divalent metal cation.

The enzyme catalyses FMN + ATP + H(+) = FAD + diphosphate. The protein operates within cofactor biosynthesis; FAD biosynthesis; FAD from FMN: step 1/1. Its function is as follows. Catalyzes the transfer of the AMP portion of ATP to flavin mononucleotide (FMN) to produce flavin adenine dinucleotide (FAD) coenzyme. The protein is FAD synthase of Methanoregula boonei (strain DSM 21154 / JCM 14090 / 6A8).